We begin with the raw amino-acid sequence, 258 residues long: Regulatory protein RecX (258 aa).

It belongs to the RecX family.

It localises to the cytoplasm. Modulates RecA activity. This is Regulatory protein RecX from Streptococcus agalactiae serotype Ia (strain ATCC 27591 / A909 / CDC SS700).